The primary structure comprises 232 residues: Imidazoleglycerol-phosphate dehydratase (232 aa).

Belongs to the imidazoleglycerol-phosphate dehydratase family.

It catalyses the reaction D-erythro-1-(imidazol-4-yl)glycerol 3-phosphate = 3-(imidazol-4-yl)-2-oxopropyl phosphate + H2O. Its pathway is amino-acid biosynthesis; L-histidine biosynthesis; L-histidine from 5-phospho-alpha-D-ribose 1-diphosphate: step 6/9. This chain is Imidazoleglycerol-phosphate dehydratase (HIS3), found in Lachancea kluyveri (strain ATCC 58438 / CBS 3082 / BCRC 21498 / NBRC 1685 / JCM 7257 / NCYC 543 / NRRL Y-12651) (Yeast).